Consider the following 99-residue polypeptide: NADH-quinone oxidoreductase subunit K (99 aa).

Helical transmembrane passes span Pro-3–Val-23, Ile-28–Phe-48, and Ile-59–Ile-79.

The protein belongs to the complex I subunit 4L family. NDH-1 is composed of 14 different subunits. Subunits NuoA, H, J, K, L, M, N constitute the membrane sector of the complex.

The protein resides in the cell membrane. It carries out the reaction a quinone + NADH + 5 H(+)(in) = a quinol + NAD(+) + 4 H(+)(out). Its function is as follows. NDH-1 shuttles electrons from NADH, via FMN and iron-sulfur (Fe-S) centers, to quinones in the respiratory chain. The immediate electron acceptor for the enzyme in this species is believed to be a menaquinone. Couples the redox reaction to proton translocation (for every two electrons transferred, four hydrogen ions are translocated across the cytoplasmic membrane), and thus conserves the redox energy in a proton gradient. The protein is NADH-quinone oxidoreductase subunit K of Frankia casuarinae (strain DSM 45818 / CECT 9043 / HFP020203 / CcI3).